Consider the following 325-residue polypeptide: Transcription initiation factor IIB (325 aa).

The TFIIB-type zinc finger occupies 19–52; the sequence is NKLWCMVCRIQDPDIIEDYAKGDLICRGCGVVVG. Positions 23, 26, 44, and 47 each coordinate Zn(2+). A run of 2 repeats spans residues 131–207 and 227–303.

This sequence belongs to the TFIIB family.

It localises to the nucleus. Functionally, general transcription factor that plays a role in transcription initiation by RNA polymerase II (Pol II). Involved in the pre-initiation complex (PIC) formation and Pol II recruitment at promoter DNA. The protein is Transcription initiation factor IIB (gtf2b) of Dictyostelium discoideum (Social amoeba).